Here is a 344-residue protein sequence, read N- to C-terminus: C5a anaphylatoxin chemotactic receptor 2 (344 aa).

The Extracellular segment spans residues 1 to 44; it reads MMNHTTSEYYDYEYDHEHYSDLPDVPVDCPAGTCFTSDVYLIVL. N-linked (GlcNAc...) asparagine glycosylation occurs at N3. Residues 45-67 traverse the membrane as a helical segment; that stretch reads LVLYAAVFLVGVPGNTLVAWVTW. Residues 68–78 lie on the Cytoplasmic side of the membrane; the sequence is KESRHRLGASW. The chain crosses the membrane as a helical span at residues 79-101; sequence FLHLTMADLLCCVSLPFLAVPIA. The Extracellular portion of the chain corresponds to 102–120; sequence QKGHWPYGAAGCWLLSSIT. An intrachain disulfide couples C113 to C192. The helical transmembrane segment at 121-143 threads the bilayer; that stretch reads ILSMYASVLLLTGLSGDLFLLAF. Residues 144-155 are Cytoplasmic-facing; the sequence is RPSWKGADHRTF. The helical transmembrane segment at 156–178 threads the bilayer; it reads GVRVVQASSWMLGLLLTVPSAVY. Residues 179–208 are Extracellular-facing; it reads RRLLQEHYPPRLVCGIDYGGSVSAEVAITT. A helical membrane pass occupies residues 209 to 231; that stretch reads VRFLFGFLGPLVFMAGCHGILQR. Residues 232–243 lie on the Cytoplasmic side of the membrane; the sequence is QMARRHWPLGTA. The chain crosses the membrane as a helical span at residues 244–266; that stretch reads VVVGFFICWTPYHVLRVIIAAAP. The Extracellular segment spans residues 267 to 280; that stretch reads PHSLLLARVLEAEP. Residues 281–300 traverse the membrane as a helical segment; the sequence is LFNGLALAHSALNPIMFLYF. Over 301 to 344 the chain is Cytoplasmic; the sequence is GRKQLCKSLQAACHWALRDPQDEESAVTKVSISTSHEMVSEMPV. At S325 the chain carries Phosphoserine.

The protein belongs to the G-protein coupled receptor 1 family. Interacts with C3 (the anaphylatoxin peptide C3a and the adipogenic hormone ASP); the interaction occurs with higher affinity for ASP, enhancing the phosphorylation and activation of GPR77, recruitment of ARRB2 to the cell surface and endocytosis of GRP77. Highly expressed in liver and spleen. Lower levels in intestine, brain and kidney. Also expressed in adipose tissues with highest levels in gonadal and ingual fat depots. Lower levels in brown tissue.

It is found in the cell membrane. Receptor for the chemotactic and inflammatory C3a, C4a and C5a anaphylatoxin peptides and also for their dearginated forms ASP/C3adesArg, C4adesArg and C5adesArg respectively. Couples weakly to G(i)-mediated signaling pathways. The polypeptide is C5a anaphylatoxin chemotactic receptor 2 (C5ar2) (Mus musculus (Mouse)).